We begin with the raw amino-acid sequence, 121 residues long: Large ribosomal subunit protein bL12 (121 aa).

Belongs to the bacterial ribosomal protein bL12 family. As to quaternary structure, homodimer. Part of the ribosomal stalk of the 50S ribosomal subunit. Forms a multimeric L10(L12)X complex, where L10 forms an elongated spine to which 2 to 4 L12 dimers bind in a sequential fashion. Binds GTP-bound translation factors.

In terms of biological role, forms part of the ribosomal stalk which helps the ribosome interact with GTP-bound translation factors. Is thus essential for accurate translation. The sequence is that of Large ribosomal subunit protein bL12 from Xanthomonas axonopodis pv. citri (strain 306).